Consider the following 132-residue polypeptide: Small ribosomal subunit protein uS19 (132 aa).

Belongs to the universal ribosomal protein uS19 family.

In terms of biological role, protein S19 forms a complex with S13 that binds strongly to the 16S ribosomal RNA. The polypeptide is Small ribosomal subunit protein uS19 (rps19) (Pyrococcus horikoshii (strain ATCC 700860 / DSM 12428 / JCM 9974 / NBRC 100139 / OT-3)).